We begin with the raw amino-acid sequence, 112 residues long: MPDYLVTLESAWYIKEAKTLDDAIGIAISEAGKRLNPSAKFVEVEAGMLACPFCERELSSAIVVADTALVGLILEMKVFRAESKEHASRIAKSVIGKALHEIPLKLLDVQEL.

It belongs to the UPF0212 family.

The chain is UPF0212 protein Mboo_1659 from Methanoregula boonei (strain DSM 21154 / JCM 14090 / 6A8).